The primary structure comprises 434 residues: Histidinol dehydrogenase (434 aa).

NAD(+) contacts are provided by Tyr-130, Gln-188, and Asn-211. The substrate site is built by Ser-237, Gln-259, and His-262. Zn(2+)-binding residues include Gln-259 and His-262. Residues Glu-326 and His-327 each act as proton acceptor in the active site. 4 residues coordinate substrate: His-327, Asp-360, Glu-414, and His-419. Residue Asp-360 participates in Zn(2+) binding. His-419 lines the Zn(2+) pocket.

This sequence belongs to the histidinol dehydrogenase family. Homodimer. Zn(2+) serves as cofactor.

It carries out the reaction L-histidinol + 2 NAD(+) + H2O = L-histidine + 2 NADH + 3 H(+). The protein operates within amino-acid biosynthesis; L-histidine biosynthesis; L-histidine from 5-phospho-alpha-D-ribose 1-diphosphate: step 9/9. Catalyzes the sequential NAD-dependent oxidations of L-histidinol to L-histidinaldehyde and then to L-histidine. This Shigella boydii serotype 4 (strain Sb227) protein is Histidinol dehydrogenase.